An 80-amino-acid polypeptide reads, in one-letter code: Exodeoxyribonuclease 7 small subunit (80 aa).

Belongs to the XseB family. Heterooligomer composed of large and small subunits.

Its subcellular location is the cytoplasm. The catalysed reaction is Exonucleolytic cleavage in either 5'- to 3'- or 3'- to 5'-direction to yield nucleoside 5'-phosphates.. In terms of biological role, bidirectionally degrades single-stranded DNA into large acid-insoluble oligonucleotides, which are then degraded further into small acid-soluble oligonucleotides. This Pseudomonas fluorescens (strain ATCC BAA-477 / NRRL B-23932 / Pf-5) protein is Exodeoxyribonuclease 7 small subunit.